The chain runs to 304 residues: Aspartate carbamoyltransferase catalytic subunit (304 aa).

Carbamoyl phosphate is bound by residues Arg-49 and Thr-50. L-aspartate is bound at residue Lys-77. Carbamoyl phosphate contacts are provided by Arg-99, His-127, and Gln-130. Positions 160 and 211 each coordinate L-aspartate. The carbamoyl phosphate site is built by Ala-250 and Pro-251.

It belongs to the aspartate/ornithine carbamoyltransferase superfamily. ATCase family. Heterododecamer (2C3:3R2) of six catalytic PyrB chains organized as two trimers (C3), and six regulatory PyrI chains organized as three dimers (R2).

The catalysed reaction is carbamoyl phosphate + L-aspartate = N-carbamoyl-L-aspartate + phosphate + H(+). The protein operates within pyrimidine metabolism; UMP biosynthesis via de novo pathway; (S)-dihydroorotate from bicarbonate: step 2/3. In terms of biological role, catalyzes the condensation of carbamoyl phosphate and aspartate to form carbamoyl aspartate and inorganic phosphate, the committed step in the de novo pyrimidine nucleotide biosynthesis pathway. In Bacillus velezensis (strain DSM 23117 / BGSC 10A6 / LMG 26770 / FZB42) (Bacillus amyloliquefaciens subsp. plantarum), this protein is Aspartate carbamoyltransferase catalytic subunit.